The sequence spans 96 residues: Small, acid-soluble spore protein gamma-type (96 aa).

Positions methionine 1–alanine 15 are enriched in polar residues. Positions methionine 1 to glutamine 96 are disordered. A compositionally biased stretch (low complexity) spans glutamine 16–glutamine 27. The span at glycine 28 to threonine 41 shows a compositional bias: polar residues. 2 repeats span residues glycine 28–glutamine 52 and glycine 61–serine 87. Low complexity-rich tracts occupy residues asparagine 42–asparagine 57 and asparagine 76–glutamine 86.

It belongs to the gamma-type SASP family.

Functionally, SASP are proteins degraded in the first minutes of spore germination and provide amino acids for both new protein synthesis and metabolism. These proteins may be involved in dormant spore's high resistance to UV light. The polypeptide is Small, acid-soluble spore protein gamma-type (Laceyella sacchari (Thermoactinomyces thalpophilus)).